A 449-amino-acid chain; its full sequence is ATP-dependent protease ATPase subunit HslU (449 aa).

Residues isoleucine 18, 60-65 (GVGKTE), aspartate 261, glutamate 327, and arginine 399 contribute to the ATP site.

This sequence belongs to the ClpX chaperone family. HslU subfamily. A double ring-shaped homohexamer of HslV is capped on each side by a ring-shaped HslU homohexamer. The assembly of the HslU/HslV complex is dependent on binding of ATP.

The protein resides in the cytoplasm. Functionally, ATPase subunit of a proteasome-like degradation complex; this subunit has chaperone activity. The binding of ATP and its subsequent hydrolysis by HslU are essential for unfolding of protein substrates subsequently hydrolyzed by HslV. HslU recognizes the N-terminal part of its protein substrates and unfolds these before they are guided to HslV for hydrolysis. The sequence is that of ATP-dependent protease ATPase subunit HslU from Oleidesulfovibrio alaskensis (strain ATCC BAA-1058 / DSM 17464 / G20) (Desulfovibrio alaskensis).